Here is a 314-residue protein sequence, read N- to C-terminus: Malate dehydrogenase (314 aa).

NAD(+) contacts are provided by residues 11–16 and D35; that span reads GSGNIG. Residues R84 and R90 each coordinate substrate. NAD(+) contacts are provided by residues N97 and 120–122; that span reads ITN. Residues N122 and R153 each contribute to the substrate site. Catalysis depends on H177, which acts as the Proton acceptor.

This sequence belongs to the LDH/MDH superfamily. MDH type 3 family.

The enzyme catalyses (S)-malate + NAD(+) = oxaloacetate + NADH + H(+). In terms of biological role, catalyzes the reversible oxidation of malate to oxaloacetate. The sequence is that of Malate dehydrogenase from Rickettsia felis (strain ATCC VR-1525 / URRWXCal2) (Rickettsia azadi).